We begin with the raw amino-acid sequence, 175 residues long: Large ribosomal subunit protein uL10 (175 aa).

Belongs to the universal ribosomal protein uL10 family. In terms of assembly, part of the ribosomal stalk of the 50S ribosomal subunit. The N-terminus interacts with L11 and the large rRNA to form the base of the stalk. The C-terminus forms an elongated spine to which L12 dimers bind in a sequential fashion forming a multimeric L10(L12)X complex.

Functionally, forms part of the ribosomal stalk, playing a central role in the interaction of the ribosome with GTP-bound translation factors. This Mycobacterium sp. (strain KMS) protein is Large ribosomal subunit protein uL10.